The sequence spans 533 residues: AAA-ATPase At5g17740 (533 aa).

The helical transmembrane segment at 11–27 threads the bilayer; sequence ASMFSTYASMMGYVMII. 252–259 contacts ATP; the sequence is GPPGTGKS.

The protein belongs to the AAA ATPase family. BCS1 subfamily. It depends on Mg(2+) as a cofactor.

Its subcellular location is the membrane. The enzyme catalyses ATP + H2O = ADP + phosphate + H(+). This is AAA-ATPase At5g17740 from Arabidopsis thaliana (Mouse-ear cress).